The sequence spans 130 residues: Protein ApaG (130 aa).

Residues 3–127 form the ApaG domain; sequence RALTRDIEVT…FSLDTPDLRR (125 aa).

In Allorhizobium ampelinum (strain ATCC BAA-846 / DSM 112012 / S4) (Agrobacterium vitis (strain S4)), this protein is Protein ApaG.